Reading from the N-terminus, the 329-residue chain is Aspartate carbamoyltransferase catalytic subunit (329 aa).

The carbamoyl phosphate site is built by arginine 66 and threonine 67. Position 94 (lysine 94) interacts with L-aspartate. Residues arginine 116, histidine 149, and glutamine 152 each coordinate carbamoyl phosphate. Positions 189 and 243 each coordinate L-aspartate. Positions 284 and 285 each coordinate carbamoyl phosphate.

It belongs to the aspartate/ornithine carbamoyltransferase superfamily. ATCase family. As to quaternary structure, heterododecamer (2C3:3R2) of six catalytic PyrB chains organized as two trimers (C3), and six regulatory PyrI chains organized as three dimers (R2).

The catalysed reaction is carbamoyl phosphate + L-aspartate = N-carbamoyl-L-aspartate + phosphate + H(+). It participates in pyrimidine metabolism; UMP biosynthesis via de novo pathway; (S)-dihydroorotate from bicarbonate: step 2/3. Functionally, catalyzes the condensation of carbamoyl phosphate and aspartate to form carbamoyl aspartate and inorganic phosphate, the committed step in the de novo pyrimidine nucleotide biosynthesis pathway. In Gloeobacter violaceus (strain ATCC 29082 / PCC 7421), this protein is Aspartate carbamoyltransferase catalytic subunit.